Consider the following 298-residue polypeptide: Probable aspartoacylase (298 aa).

Residues H13 and E16 each coordinate Zn(2+). Residues R54 and 61-62 (NR) contribute to the substrate site. Position 103 (H103) interacts with Zn(2+). Residues E161 and Y271 each coordinate substrate.

The protein belongs to the AspA/AstE family. Aspartoacylase subfamily. Requires Zn(2+) as cofactor.

It catalyses the reaction an N-acyl-L-aspartate + H2O = a carboxylate + L-aspartate. This Prochlorococcus marinus (strain MIT 9515) protein is Probable aspartoacylase.